The following is a 251-amino-acid chain: uncharacterized protein (251 aa).

The N-terminal stretch at 1–19 is a signal peptide; it reads MRYLKRITIYISLLILVSG. Residue Cys-20 is the site of N-palmitoyl cysteine attachment. Cys-20 carries S-diacylglycerol cysteine lipidation.

The protein belongs to the staphylococcal tandem lipoprotein family.

It localises to the cell membrane. This is an uncharacterized protein from Staphylococcus epidermidis (strain ATCC 12228 / FDA PCI 1200).